Reading from the N-terminus, the 509-residue chain is Bifunctional purine biosynthesis protein PurH (509 aa).

The region spanning 1–144 (MKRALISVSD…KNYAAVTVVV (144 aa)) is the MGS-like domain.

This sequence belongs to the PurH family.

The catalysed reaction is (6R)-10-formyltetrahydrofolate + 5-amino-1-(5-phospho-beta-D-ribosyl)imidazole-4-carboxamide = 5-formamido-1-(5-phospho-D-ribosyl)imidazole-4-carboxamide + (6S)-5,6,7,8-tetrahydrofolate. The enzyme catalyses IMP + H2O = 5-formamido-1-(5-phospho-D-ribosyl)imidazole-4-carboxamide. It participates in purine metabolism; IMP biosynthesis via de novo pathway; 5-formamido-1-(5-phospho-D-ribosyl)imidazole-4-carboxamide from 5-amino-1-(5-phospho-D-ribosyl)imidazole-4-carboxamide (10-formyl THF route): step 1/1. The protein operates within purine metabolism; IMP biosynthesis via de novo pathway; IMP from 5-formamido-1-(5-phospho-D-ribosyl)imidazole-4-carboxamide: step 1/1. This Listeria monocytogenes serotype 4b (strain CLIP80459) protein is Bifunctional purine biosynthesis protein PurH.